Consider the following 288-residue polypeptide: Bifunctional protein FolD (288 aa).

Residues 166–168 (GRS), S191, and I232 contribute to the NADP(+) site.

Belongs to the tetrahydrofolate dehydrogenase/cyclohydrolase family. As to quaternary structure, homodimer.

The catalysed reaction is (6R)-5,10-methylene-5,6,7,8-tetrahydrofolate + NADP(+) = (6R)-5,10-methenyltetrahydrofolate + NADPH. The enzyme catalyses (6R)-5,10-methenyltetrahydrofolate + H2O = (6R)-10-formyltetrahydrofolate + H(+). It participates in one-carbon metabolism; tetrahydrofolate interconversion. Its function is as follows. Catalyzes the oxidation of 5,10-methylenetetrahydrofolate to 5,10-methenyltetrahydrofolate and then the hydrolysis of 5,10-methenyltetrahydrofolate to 10-formyltetrahydrofolate. This is Bifunctional protein FolD from Rickettsia africae (strain ESF-5).